The sequence spans 185 residues: Small ribosomal subunit protein bS16 (185 aa).

Positions 83–185 are disordered; it reads QWTHGNNPEK…APASEETTEG (103 aa). Basic and acidic residues predominate over residues 89-125; the sequence is NPEKAKPGKKAQERDAERTQRDADRVAAEAQAKEDAK. Low complexity-rich tracts occupy residues 126 to 146 and 159 to 176; these read AAAAEAAEAAAAAAAEAAAAP and VEAAAEEAPAAEAAAEEA.

It belongs to the bacterial ribosomal protein bS16 family.

This is Small ribosomal subunit protein bS16 from Caulobacter sp. (strain K31).